A 341-amino-acid polypeptide reads, in one-letter code: D-erythrose-4-phosphate dehydrogenase (341 aa).

Arg14 to Ile15 provides a ligand contact to NAD(+). Substrate contacts are provided by residues Ser156 to Thr158, Arg202, Thr215 to Arg216, and Arg238. Cys157 functions as the Nucleophile in the catalytic mechanism. NAD(+) is bound at residue Asn320.

Belongs to the glyceraldehyde-3-phosphate dehydrogenase family. Epd subfamily. In terms of assembly, homotetramer.

It localises to the cytoplasm. It carries out the reaction D-erythrose 4-phosphate + NAD(+) + H2O = 4-phospho-D-erythronate + NADH + 2 H(+). The protein operates within cofactor biosynthesis; pyridoxine 5'-phosphate biosynthesis; pyridoxine 5'-phosphate from D-erythrose 4-phosphate: step 1/5. In terms of biological role, catalyzes the NAD-dependent conversion of D-erythrose 4-phosphate to 4-phosphoerythronate. The chain is D-erythrose-4-phosphate dehydrogenase from Idiomarina loihiensis (strain ATCC BAA-735 / DSM 15497 / L2-TR).